The following is a 357-amino-acid chain: sn-glycerol-3-phosphate import ATP-binding protein UgpC (357 aa).

Positions 4–235 (LKLQAVTKSY…PASLFVASFI (232 aa)) constitute an ABC transporter domain. 37-44 (GPSGCGKS) serves as a coordination point for ATP.

Belongs to the ABC transporter superfamily. sn-glycerol-3-phosphate importer (TC 3.A.1.1.3) family. In terms of assembly, the complex is composed of two ATP-binding proteins (UgpC), two transmembrane proteins (UgpA and UgpE) and a solute-binding protein (UgpB).

The protein resides in the cell inner membrane. It carries out the reaction sn-glycerol 3-phosphate(out) + ATP + H2O = sn-glycerol 3-phosphate(in) + ADP + phosphate + H(+). Functionally, part of the ABC transporter complex UgpBAEC involved in sn-glycerol-3-phosphate (G3P) import. Responsible for energy coupling to the transport system. The polypeptide is sn-glycerol-3-phosphate import ATP-binding protein UgpC (Yersinia pestis bv. Antiqua (strain Antiqua)).